A 739-amino-acid chain; its full sequence is uncharacterized protein (739 aa).

Transmembrane regions (helical) follow at residues 53–73, 90–110, 114–134, 178–198, 421–441, 457–477, 491–511, and 532–552; these read LALGIALWMELGSPQWAALTV, WHLFGMVVGVISGITLVAAIP, LMFILLLAVGIGTFCMIGTFM, TYILLGIVLEASISGLFQLGL, LIWICTAWPSGLTFIMFVCIV, AFLRGACCAVVAAGILNLALM, GLAMMIGGLAFAYPPLTLPAV, and IVYFNTALPLVLGLLYASWMY.

It belongs to the aromatic acid exporter ArAE (TC 2.A.85) family.

Its subcellular location is the cell membrane. This is an uncharacterized protein from Gluconobacter oxydans (strain 621H) (Gluconobacter suboxydans).